Consider the following 498-residue polypeptide: Angiopoietin-1 (498 aa).

The N-terminal stretch at 1–19 (MTVFLSFAFFAAILTHIGC) is a signal peptide. The stretch at 81–119 (QKLQHLEHVMENYTQWLQKLENYIVENMKSEMAQIQQNA) forms a coiled coil. N-linked (GlcNAc...) asparagine glycosylation is found at Asn92, Asn122, Asn154, Asn243, and Asn295. Residues 153–261 (LNQTSRLEIQ…LELMDTVHNL (109 aa)) are a coiled coil. A Fibrinogen C-terminal domain is found at 277 to 497 (REEEKPFRDC…STTMMIRPLD (221 aa)). Disulfide bonds link Cys286–Cys315 and Cys439–Cys452.

As to quaternary structure, homooligomer. Interacts with TEK/TIE2. Interacts with SVEP1/polydom. Interacts with THBD; this interaction significantly inhibits the generation of activated PC and TAFIa/CPB2 by the thrombin/thrombomodulin complex.

The protein localises to the secreted. Its function is as follows. Binds and activates TEK/TIE2 receptor by inducing its dimerization and tyrosine phosphorylation. Plays an important role in the regulation of angiogenesis, endothelial cell survival, proliferation, migration, adhesion and cell spreading, reorganization of the actin cytoskeleton, but also maintenance of vascular quiescence. Required for normal angiogenesis and heart development during embryogenesis. After birth, activates or inhibits angiogenesis, depending on the context. Inhibits angiogenesis and promotes vascular stability in quiescent vessels, where endothelial cells have tight contacts. In quiescent vessels, ANGPT1 oligomers recruit TEK to cell-cell contacts, forming complexes with TEK molecules from adjoining cells, and this leads to preferential activation of phosphatidylinositol 3-kinase and the AKT1 signaling cascades. In migrating endothelial cells that lack cell-cell adhesions, ANGT1 recruits TEK to contacts with the extracellular matrix, leading to the formation of focal adhesion complexes, activation of PTK2/FAK and of the downstream kinases MAPK1/ERK2 and MAPK3/ERK1, and ultimately to the stimulation of sprouting angiogenesis. Mediates blood vessel maturation/stability. Implicated in endothelial developmental processes later and distinct from that of VEGF. Appears to play a crucial role in mediating reciprocal interactions between the endothelium and surrounding matrix and mesenchyme. This Mus musculus (Mouse) protein is Angiopoietin-1 (Angpt1).